Consider the following 210-residue polypeptide: Chaperone protein TorD (210 aa).

It belongs to the TorD/DmsD family. TorD subfamily.

The protein localises to the cytoplasm. Functionally, involved in the biogenesis of TorA. Acts on TorA before the insertion of the molybdenum cofactor and, as a result, probably favors a conformation of the apoenzyme that is competent for acquiring the cofactor. The chain is Chaperone protein TorD from Salmonella choleraesuis (strain SC-B67).